Here is a 726-residue protein sequence, read N- to C-terminus: Dipeptidyl-peptidase 5 (726 aa).

Residues 1-19 (MAAAKWLIASLAFASSGLA) form the signal peptide. N96 and N252 each carry an N-linked (GlcNAc...) asparagine glycan. The interval 269 to 291 (AEPINKRNGPRTPQGIEGASSSP) is disordered. Residue S558 is the Charge relay system of the active site. N605 and N638 each carry an N-linked (GlcNAc...) asparagine glycan. Residues D641 and H673 each act as charge relay system in the active site. N699 is a glycosylation site (N-linked (GlcNAc...) asparagine).

Belongs to the peptidase S9C family.

Its subcellular location is the secreted. This is Dipeptidyl-peptidase 5 (DPPV) from Trichophyton schoenleinii.